The chain runs to 79 residues: Acyl carrier protein (79 aa).

The 76-residue stretch at 2 to 77 folds into the Carrier domain; sequence SDIEARVKKI…NAIDYANTHH (76 aa). Position 37 is an O-(pantetheine 4'-phosphoryl)serine (serine 37).

The protein belongs to the acyl carrier protein (ACP) family. In terms of processing, 4'-phosphopantetheine is transferred from CoA to a specific serine of apo-ACP by AcpS. This modification is essential for activity because fatty acids are bound in thioester linkage to the sulfhydryl of the prosthetic group.

Its subcellular location is the cytoplasm. The protein operates within lipid metabolism; fatty acid biosynthesis. Carrier of the growing fatty acid chain in fatty acid biosynthesis. The chain is Acyl carrier protein from Polaromonas naphthalenivorans (strain CJ2).